The chain runs to 420 residues: UDP-glucuronic acid decarboxylase 1 (420 aa).

Met1 is subject to N-acetylmethionine. At 1–19 (MVSKALLRLVSAVNRRRMK) the chain is on the cytoplasmic side. The chain crosses the membrane as a helical; Signal-anchor for type II membrane protein span at residues 20–40 (LLLGIALLAYVASVWGNFVNM). At 41–420 (RSIQENGELK…RIKKGRTRHS (380 aa)) the chain is on the lumenal side. Thr94 is subject to Phosphothreonine. NAD(+)-binding residues include Gly98, Phe99, Val100, Asp119, Asn120, Phe122, Thr123, Gly124, Asp144, and Val145. Residues Leu149 and Tyr150 each contribute to the UDP-alpha-D-glucuronate site. NAD(+) contacts are provided by Leu159 and Ser161. A UDP-alpha-D-glucuronate-binding site is contributed by Lys177. Residue Thr178 participates in NAD(+) binding. UDP-alpha-D-glucuronate is bound by residues Asn185, Gly188, Lys191, and Arg192. Residues Ala200, Tyr231, and Lys235 each contribute to the NAD(+) site. The active-site Proton acceptor is Tyr231. UDP-alpha-D-glucuronate-binding residues include Tyr245, Gln248, and Glu249. Residues Thr261, His267, and Arg272 each coordinate NAD(+). A glycan (N-linked (GlcNAc...) asparagine) is linked at Asn316.

Belongs to the NAD(P)-dependent epimerase/dehydratase family. UDP-glucuronic acid decarboxylase subfamily. Homodimer and homotetramer. Interacts with AKT1. It depends on NAD(+) as a cofactor.

Its subcellular location is the golgi apparatus. The protein resides in the golgi stack membrane. It catalyses the reaction UDP-alpha-D-glucuronate + H(+) = UDP-alpha-D-xylose + CO2. Its pathway is nucleotide-sugar biosynthesis; UDP-alpha-D-xylose biosynthesis; UDP-alpha-D-xylose from UDP-alpha-D-glucuronate: step 1/1. Catalyzes the NAD-dependent decarboxylation of UDP-glucuronic acid to UDP-xylose. Necessary for the biosynthesis of the core tetrasaccharide in glycosaminoglycan biosynthesis. In Homo sapiens (Human), this protein is UDP-glucuronic acid decarboxylase 1.